A 158-amino-acid chain; its full sequence is 2-C-methyl-D-erythritol 2,4-cyclodiphosphate synthase (158 aa).

A divalent metal cation contacts are provided by aspartate 9 and histidine 11. Residues 9 to 11 and 35 to 36 contribute to the 4-CDP-2-C-methyl-D-erythritol 2-phosphate site; these read DVH and HS. Position 43 (histidine 43) interacts with a divalent metal cation. Residues 57 to 59, 62 to 66, 101 to 107, 133 to 136, phenylalanine 140, and arginine 143 contribute to the 4-CDP-2-C-methyl-D-erythritol 2-phosphate site; these read DIG, FPDTD, AQKPKML, and TTTE.

This sequence belongs to the IspF family. In terms of assembly, homotrimer. The cofactor is a divalent metal cation.

It catalyses the reaction 4-CDP-2-C-methyl-D-erythritol 2-phosphate = 2-C-methyl-D-erythritol 2,4-cyclic diphosphate + CMP. Its pathway is isoprenoid biosynthesis; isopentenyl diphosphate biosynthesis via DXP pathway; isopentenyl diphosphate from 1-deoxy-D-xylulose 5-phosphate: step 4/6. In terms of biological role, involved in the biosynthesis of isopentenyl diphosphate (IPP) and dimethylallyl diphosphate (DMAPP), two major building blocks of isoprenoid compounds. Catalyzes the conversion of 4-diphosphocytidyl-2-C-methyl-D-erythritol 2-phosphate (CDP-ME2P) to 2-C-methyl-D-erythritol 2,4-cyclodiphosphate (ME-CPP) with a corresponding release of cytidine 5-monophosphate (CMP). The chain is 2-C-methyl-D-erythritol 2,4-cyclodiphosphate synthase from Bacillus subtilis (strain 168).